A 1485-amino-acid chain; its full sequence is MIERGKFRSLTLVNWNGFFARTFDLDELVTTLSGGNGAGKSTTMAAFVTALIPDLTLLHFRNTTEAGATSGSRDKGLHGKLRPGVCYAALDVVNSRHQRVLVGVRLQQVAGRDRKVDIKPFAIQGLPTAYQPTQLLTETVDGRQARVLALPELKERVEAIDGVQFKQFNSITDYHALMFDLGVVPRRLRSAADRSKFYRLIEASLYGGISSAITRSLRDYLLPENGGVRKAFQDMEAALRENRMTLEAIRVTQSDRDLFKHLISEATAYVSADYMRHANERRSHLDQALQLRRELLGGRRQLLSEQYRHVEMARELEEQNGAEADLETDYQAASDHLNLVQTALRQREKIERYQGDLEELSYRLDEQSEVAAEAQEQYESCQERSEAAEAEVDELKSQLADYQQALDVQQTRAIQYQQALQALARAQTLCTLPALSADDVESWLEDFRAREEEATELLLQLEQKLSVANAAHSQFEEAYRLVARVVGEVSRSDAWQAGRALLREWPALQHQAQRVAPIGARLAELEQRLNAQQDAERLLQECVKRSGRDCDAQQLDALQAELEAQIDTLTQQAADAGERSMALRQELEQIAGRVGTLSARAPAWIAAQEALNALESQCGETLEESRAVTDQMQQLLEREREYTVERDEIAARKGALEREIERLSQPGGAEDARLIALAERFGGVLLSEIYDDVTLDDAPYFSALYGPSRHAIVVPDLAAVRAQLAGLEECPEDLYLIEGDPQSFDDSVFAVEELEKAVVVKIADRQWRYSRFPSLPLFGRAARESRLETLYTEREALAERYATLSFDVQKIQRLHHAFSRFIGSHLAVVFDNDPEQELRQLQQRRGEIEREFTGQDAQTQQQRQQLQQARELAGLLNRLVPQVGLLADETLPDRVDELREELEQARDAARYLQQHGATLAALEPVIGVLQSDPQQHEQLQQDYQQALQRQRLTKQQAFALTEVAQRRAHFSYSDAVGMLGENADLNERLRQRLEHAEADRSRSREQLRQHQAQLAQYNQVLASLKSAFDAKRDMLQELQQEMQDIGVVADASAEARARTRRDELHAALSENRSRRNQLEKQITICEAEMESLIKRLRKAERDYHLMRTQVTQAKAGWCAVMRLVRDNGVERRLHRRELAYMDADELRSMSDKALGALRLAVADNEHLRDVLRLSEDPKRPERKVQFYVAVYQHLRERIRQDIIRSDDPIDAIEQMEIELARLTEELTAREQKLAISARSVANIIRKTIQREQNRIRMLNQGLQSVAFGQVNSVRLNVNVRDSHAMLLNVLSEQQEQHQDLFNSNRLTFSEALAKLYQRLNPQIDMGQRTPQTIGEELLDYRSYLEMEVEVNRGSDGWLRAESGALSTGEAIGTGMSILVMVVQSWEEESRRLRGKDISPCRLLFLDEAARLDAKSIATLFELCERLEMQLIIAAPENISPEKGTTYKLVRKVFNHIEHVHVVGLRGFSAAAEEEHMAQPLEDTPA.

Residue 34 to 41 coordinates ATP; the sequence is GGNGAGKS. Coiled-coil stretches lie at residues 311–480 and 519–665; these read EMAR…EAYR and GARL…RLSQ. Residues 666-783 form a flexible hinge region; sequence PGGAEDARLI…SLPLFGRAAR (118 aa). Coiled coils occupy residues 832–1115 and 1209–1265; these read NDPE…QAKA and IDAI…LQSV.

The protein belongs to the SMC family. MukB subfamily. As to quaternary structure, homodimerization via its hinge domain. Binds to DNA via its C-terminal region. Interacts, and probably forms a ternary complex, with MukE and MukF via its C-terminal region. The complex formation is stimulated by calcium or magnesium. Interacts with tubulin-related protein FtsZ.

The protein resides in the cytoplasm. It localises to the nucleoid. Functionally, plays a central role in chromosome condensation, segregation and cell cycle progression. Functions as a homodimer, which is essential for chromosome partition. Involved in negative DNA supercoiling in vivo, and by this means organize and compact chromosomes. May achieve or facilitate chromosome segregation by condensation DNA from both sides of a centrally located replisome during cell division. The protein is Chromosome partition protein MukB of Edwardsiella ictaluri (strain 93-146).